A 220-amino-acid chain; its full sequence is Redox-sensing transcriptional repressor Rex (220 aa).

Residues 16 to 55 constitute a DNA-binding region (H-T-H motif); the sequence is MYVQVLETLKREGSQVVSSELLARTCSVNPSQIRKDLAYF. 90–95 contacts NAD(+); it reads GIGNLG.

The protein belongs to the transcriptional regulatory Rex family. In terms of assembly, homodimer.

The protein localises to the cytoplasm. Modulates transcription in response to changes in cellular NADH/NAD(+) redox state. The chain is Redox-sensing transcriptional repressor Rex from Solidesulfovibrio magneticus (strain ATCC 700980 / DSM 13731 / RS-1) (Desulfovibrio magneticus).